A 122-amino-acid chain; its full sequence is Biogenesis of lysosome-related organelles complex 1 subunit BLS1 (122 aa).

Residue serine 33 is modified to Phosphoserine.

The protein belongs to the BLOC1S1 family. Component of the biogenesis of lysosome-related organelles complex-1 (BLOC-1) composed of at least BLI1, BLS1, CNL1, KXD1, SNN1 and VAB2.

The protein localises to the endosome. Functionally, component of the biogenesis of lysosome-related organelles complex-1 (BLOC-1), a complex involved in endosomal cargo sorting. The polypeptide is Biogenesis of lysosome-related organelles complex 1 subunit BLS1 (BLS1) (Saccharomyces cerevisiae (strain RM11-1a) (Baker's yeast)).